We begin with the raw amino-acid sequence, 159 residues long: Ribosomal RNA large subunit methyltransferase H (159 aa).

S-adenosyl-L-methionine contacts are provided by residues Gly-108 and 127–132; that span reads FSKMTF.

Belongs to the RNA methyltransferase RlmH family. As to quaternary structure, homodimer.

The protein localises to the cytoplasm. The catalysed reaction is pseudouridine(1915) in 23S rRNA + S-adenosyl-L-methionine = N(3)-methylpseudouridine(1915) in 23S rRNA + S-adenosyl-L-homocysteine + H(+). Specifically methylates the pseudouridine at position 1915 (m3Psi1915) in 23S rRNA. This is Ribosomal RNA large subunit methyltransferase H from Clostridium perfringens (strain ATCC 13124 / DSM 756 / JCM 1290 / NCIMB 6125 / NCTC 8237 / Type A).